The following is a 426-amino-acid chain: Monocarboxylate transporter 13 (426 aa).

At 1-10 (MAYRAEPPDG) the chain is on the cytoplasmic side. Helical transmembrane passes span 11-31 (GWGWMVVLSAFFQSALVFGVL), 52-72 (VSWIASIGIAVQQFGSPVGSA), 83-103 (VMTGGILTALGMLLASFATSL), 106-126 (LYLSIGLLSGSGWALTFTPTL), 139-159 (LAMGLALTGVGLSSFAFAPLF), 172-192 (LLLVSALSLHLVACGALLRPL), 221-241 (VALTLINTGYFIPYVHLVAHL), 244-264 (LGWDPLPAAFLLSVAAISDLV), 283-303 (LLMLWTTLTGVILALYPVAEA), 306-326 (GLVALTMAYGFTSGALTPVAF), 338-358 (IYCGLGLVQMVESIGGLLGAP), and 374-394 (FVVAGAFLLAGSGVLITLPHF). At 395–426 (FCFSAPTSKPQDLVTEALDTKVPLPEEGLGED) the chain is on the cytoplasmic side.

Belongs to the major facilitator superfamily. Monocarboxylate porter (TC 2.A.1.13) family.

It is found in the golgi apparatus membrane. The protein resides in the cell membrane. Functionally, proton-linked monocarboxylate transporter. May catalyze the transport of monocarboxylates across the plasma membrane. The polypeptide is Monocarboxylate transporter 13 (SLC16A13) (Bos taurus (Bovine)).